We begin with the raw amino-acid sequence, 381 residues long: MRKQLPVICVAAGIVLLAACTNDGGQQQTTVAPQPAVCNGPTVEISGAEPRYEPLNPTANQDYQRDGKSYKIVQDPSRFSQAGLAAIYDAEPGSNLTASGEMFDPMQLTAAHPTLPIPSYARITNLANGRMIVVRINDRGPYGTDRVISLSRAAADRLNTSNNTKVRIDPIIVAPDGSLSGPGMACTTVAKQTYALPPRPDLSGGMGSASSAPAQPQGDVLPVSNSTLKSDDTTGAPVSSSGFLGAPTTLAPGVLESNEPTPAPQPAPVSAPVAAPATAPATATPVSAPAAAAPVSAPVSAPAAAASGRFVVQVGAVSDQTRAQQYQQRLSQQFSVPGRVIQNGAVWRIQLGPFASKAEASALQQRLQTEAQLQSFIASAQ.

The N-terminal stretch at 1–19 is a signal peptide; the sequence is MRKQLPVICVAAGIVLLAA. Cys20 carries the N-palmitoyl cysteine lipid modification. Residue Cys20 is the site of S-diacylglycerol cysteine attachment. The interval 196–274 is disordered; the sequence is LPPRPDLSGG…QPAPVSAPVA (79 aa). A compositionally biased stretch (low complexity) spans 208–218; the sequence is SASSAPAQPQG. Residues 304-380 enclose the SPOR domain; that stretch reads AAASGRFVVQ…AQLQSFIASA (77 aa).

It belongs to the RlpA family.

Its subcellular location is the cell membrane. Its function is as follows. Lytic transglycosylase with a strong preference for naked glycan strands that lack stem peptides. The chain is Endolytic peptidoglycan transglycosylase RlpA from Salmonella typhimurium (strain LT2 / SGSC1412 / ATCC 700720).